The primary structure comprises 265 residues: Cytochrome c oxidase subunit 3 (265 aa).

Transmembrane regions (helical) follow at residues 16–36 (PWPI…VMYM), 41–61 (GGAT…FVWW), 84–104 (YGSI…FWAS), 162–182 (AVYA…FQGM), 200–220 (FLLA…FLIV), and 242–262 (AWYW…IYWW).

Belongs to the cytochrome c oxidase subunit 3 family. As to quaternary structure, component of the cytochrome c oxidase (complex IV, CIV), a multisubunit enzyme composed of a catalytic core of 3 subunits and several supernumerary subunits. The complex exists as a monomer or a dimer and forms supercomplexes (SCs) in the inner mitochondrial membrane with ubiquinol-cytochrome c oxidoreductase (cytochrome b-c1 complex, complex III, CIII).

Its subcellular location is the mitochondrion inner membrane. The enzyme catalyses 4 Fe(II)-[cytochrome c] + O2 + 8 H(+)(in) = 4 Fe(III)-[cytochrome c] + 2 H2O + 4 H(+)(out). In terms of biological role, component of the cytochrome c oxidase, the last enzyme in the mitochondrial electron transport chain which drives oxidative phosphorylation. The respiratory chain contains 3 multisubunit complexes succinate dehydrogenase (complex II, CII), ubiquinol-cytochrome c oxidoreductase (cytochrome b-c1 complex, complex III, CIII) and cytochrome c oxidase (complex IV, CIV), that cooperate to transfer electrons derived from NADH and succinate to molecular oxygen, creating an electrochemical gradient over the inner membrane that drives transmembrane transport and the ATP synthase. Cytochrome c oxidase is the component of the respiratory chain that catalyzes the reduction of oxygen to water. Electrons originating from reduced cytochrome c in the intermembrane space (IMS) are transferred via the dinuclear copper A center (CU(A)) of subunit 2 and heme A of subunit 1 to the active site in subunit 1, a binuclear center (BNC) formed by heme A3 and copper B (CU(B)). The BNC reduces molecular oxygen to 2 water molecules using 4 electrons from cytochrome c in the IMS and 4 protons from the mitochondrial matrix. The polypeptide is Cytochrome c oxidase subunit 3 (COX3) (Zea mays (Maize)).